The chain runs to 340 residues: Outer membrane protein U (340 aa).

Positions 1–21 (MKKTLIALSVSAAAVATGVNA) are cleaved as a signal peptide.

This sequence belongs to the Gram-negative porin family. In terms of assembly, homotrimer.

Its subcellular location is the cell outer membrane. Its function is as follows. Forms pores that allow passive diffusion of small molecules across the outer membrane. The sequence is that of Outer membrane protein U (ompU) from Vibrio vulnificus (strain CMCP6).